The following is a 134-amino-acid chain: MTLQVCIMTPDRIFWNDQADEIILPTNTGQMGVLTNHAPLITALDIGVTLIRSNSNWNPVALMGGFALVKQNQVTILVNEAESAQTIGVDEAEIAFQEAKTKLEQSQGEKQRVEATFVFKRARARYQVVKQLGV.

It belongs to the ATPase epsilon chain family. In terms of assembly, F-type ATPases have 2 components, CF(1) - the catalytic core - and CF(0) - the membrane proton channel. CF(1) has five subunits: alpha(3), beta(3), gamma(1), delta(1), epsilon(1). CF(0) has three main subunits: a, b and c.

The protein resides in the plastid. It localises to the chloroplast thylakoid membrane. Produces ATP from ADP in the presence of a proton gradient across the membrane. This Chlorella vulgaris (Green alga) protein is ATP synthase epsilon chain, chloroplastic.